We begin with the raw amino-acid sequence, 509 residues long: Putative Rieske 2Fe-2S iron-sulfur protein YhfW (509 aa).

One can recognise a Rieske domain in the interval 423 to 509 (KPDVQFEDIS…IKPLKQIDLD (87 aa)). Residues C463, H465, C481, and H484 each contribute to the [2Fe-2S] cluster site. A disulfide bond links C468 and C483.

It belongs to the Rieske iron-sulfur protein family. [2Fe-2S] cluster serves as cofactor.

The chain is Putative Rieske 2Fe-2S iron-sulfur protein YhfW (yhfW) from Bacillus subtilis (strain 168).